We begin with the raw amino-acid sequence, 209 residues long: Kynurenine formamidase (209 aa).

Trp20 is a binding site for substrate. Residues His50, His54, and Asp56 each coordinate Zn(2+). His60 (proton donor/acceptor) is an active-site residue. Residues His161 and Glu173 each coordinate Zn(2+).

It belongs to the Cyclase 1 superfamily. KynB family. Homodimer. It depends on Zn(2+) as a cofactor.

It carries out the reaction N-formyl-L-kynurenine + H2O = L-kynurenine + formate + H(+). The protein operates within amino-acid degradation; L-tryptophan degradation via kynurenine pathway; L-kynurenine from L-tryptophan: step 2/2. Its function is as follows. Catalyzes the hydrolysis of N-formyl-L-kynurenine to L-kynurenine, the second step in the kynurenine pathway of tryptophan degradation. The chain is Kynurenine formamidase from Bacillus mycoides (strain KBAB4) (Bacillus weihenstephanensis).